A 211-amino-acid polypeptide reads, in one-letter code: Probable nicotinate-nucleotide adenylyltransferase (211 aa).

The protein belongs to the NadD family.

The catalysed reaction is nicotinate beta-D-ribonucleotide + ATP + H(+) = deamido-NAD(+) + diphosphate. It participates in cofactor biosynthesis; NAD(+) biosynthesis; deamido-NAD(+) from nicotinate D-ribonucleotide: step 1/1. Catalyzes the reversible adenylation of nicotinate mononucleotide (NaMN) to nicotinic acid adenine dinucleotide (NaAD). The polypeptide is Probable nicotinate-nucleotide adenylyltransferase (Legionella pneumophila (strain Paris)).